Reading from the N-terminus, the 202-residue chain is Glycolipid transfer protein 1 (202 aa).

A ganglioside GM3 (d18:1(4E)) is bound by residues Asp-52, Asn-56, Trp-99, and His-138.

Belongs to the GLTP family.

May be involved in glycolipids transfer. This chain is Glycolipid transfer protein 1, found in Arabidopsis thaliana (Mouse-ear cress).